A 467-amino-acid polypeptide reads, in one-letter code: Cytochrome c-552 (467 aa).

Residues 1–27 (MVKKLTGKSFALSALVAASFVAAGAMA) form the signal peptide. H87 is a binding site for heme c. The heme site is built by C115, C118, and K119. 6 residues coordinate heme c: C153, C156, H157, C195, C198, and H199. Ca(2+) is bound by residues E201, Y202, K250, and Q252. Y202 serves as a coordination point for substrate. A substrate-binding site is contributed by H253. Positions 264, 271, 274, 275, 290, 303, 306, 307, and 382 each coordinate heme c.

This sequence belongs to the cytochrome c-552 family. Ca(2+) serves as cofactor. Heme c is required as a cofactor.

Its subcellular location is the periplasm. The catalysed reaction is 6 Fe(III)-[cytochrome c] + NH4(+) + 2 H2O = 6 Fe(II)-[cytochrome c] + nitrite + 8 H(+). It participates in nitrogen metabolism; nitrate reduction (assimilation). In terms of biological role, catalyzes the reduction of nitrite to ammonia, consuming six electrons in the process. The sequence is that of Cytochrome c-552 from Shewanella amazonensis (strain ATCC BAA-1098 / SB2B).